Reading from the N-terminus, the 378-residue chain is Mannitol-1-phosphate 5-dehydrogenase (378 aa).

4 to 15 (SVHFGAGNIGRG) serves as a coordination point for NAD(+).

Belongs to the mannitol dehydrogenase family.

It carries out the reaction D-mannitol 1-phosphate + NAD(+) = beta-D-fructose 6-phosphate + NADH + H(+). In Streptococcus pneumoniae (strain ATCC BAA-255 / R6), this protein is Mannitol-1-phosphate 5-dehydrogenase.